Consider the following 42-residue polypeptide: Potassium channel toxin gamma-KTx 1.3 (42 aa).

Intrachain disulfides connect C5–C23, C11–C34, C20–C39, and C24–C41.

It belongs to the ergtoxin family. Gamma-KTx 1 subfamily. In terms of tissue distribution, expressed by the venom gland.

The protein localises to the secreted. Its function is as follows. Blocks Kv11/ERG potassium channels. This Centruroides gracilis (Slenderbrown scorpion) protein is Potassium channel toxin gamma-KTx 1.3.